The sequence spans 309 residues: Ecto-ADP-ribosyltransferase 5 (309 aa).

Residues 1–23 (MILEDLLMVLSCLSLHALWKVRA) form the signal peptide. Cys-43 and Cys-259 are oxidised to a cystine. One can recognise a TR mART core domain in the interval 63–253 (ALLRESWEAA…IVTLWSYDQT (191 aa)). Tyr-100 is an NAD(+) binding site. Asn-102 is a glycosylation site (N-linked (GlcNAc...) asparagine). NAD(+) contacts are provided by Arg-161 and Gln-181. The active site involves Arg-161. The active site involves Ser-184. Asn-197 carries N-linked (GlcNAc...) asparagine glycosylation. Residue Ser-215 coordinates NAD(+). Glu-222 is an active-site residue.

Belongs to the Arg-specific ADP-ribosyltransferase family. Abundantly expressed in testis. Lower levels in cardiac and skeletal muscle.

The protein localises to the secreted. It localises to the membrane. It carries out the reaction L-arginyl-[protein] + NAD(+) = N(omega)-(ADP-D-ribosyl)-L-arginyl-[protein] + nicotinamide + H(+). This chain is Ecto-ADP-ribosyltransferase 5 (Art5), found in Mus musculus (Mouse).